A 353-amino-acid chain; its full sequence is MTIALGKFTKDENDLFDIMDDWLRRDRFVFVGWSGLLLFPCAYFALGGWFTGTTFVTSWYTHGLASSYLEGCNFLTAAVSTPANSLAHSLLLLWGPEAQGDFTRWCQLGGLWTFVALHGAFALIGFMLRQFELARSVQLRPYNAIAFSGPIAVFVSVFLIYPLGQSGWFFAPSFGVAAIFRFILFFQGFHNWTLNPFHMMGVAGVLGAALLCAIHGATVENTLFEDGDGANTFRAFNPTQAEETYSMVTANRFWSQIFGVAFSNKRWLHFFMLFVPVTGLWMSALGVVGLALNLRAYDFVSQEIRAAEDPEFETFYTKNILLNEGIRAWMAAQDQPHENLIFPEEVLPRGNAL.

Threonine 2 is modified (N-acetylthreonine). At threonine 2 the chain carries Phosphothreonine. Residues 41-61 (CAYFALGGWFTGTTFVTSWYT) traverse the membrane as a helical segment. Residue histidine 118 coordinates chlorophyll a. A helical membrane pass occupies residues 125 to 141 (GFMLRQFELARSVQLRP). Positions 130 and 143 each coordinate pheophytin a. The chain crosses the membrane as a helical span at residues 153-166 (VFVSVFLIYPLGQS). Histidine 198 is a chlorophyll a binding site. The helical transmembrane segment at 208–228 (AALLCAIHGATVENTLFEDGD) threads the bilayer. A plastoquinone contacts are provided by histidine 215 and phenylalanine 262. Residue histidine 215 participates in Fe cation binding. Residue histidine 269 participates in Fe cation binding. A helical membrane pass occupies residues 279-295 (GLWMSALGVVGLALNLR).

This sequence belongs to the reaction center PufL/M/PsbA/D family. In terms of assembly, PSII is composed of 1 copy each of membrane proteins PsbA, PsbB, PsbC, PsbD, PsbE, PsbF, PsbH, PsbI, PsbJ, PsbK, PsbL, PsbM, PsbT, PsbX, PsbY, PsbZ, Psb30/Ycf12, at least 3 peripheral proteins of the oxygen-evolving complex and a large number of cofactors. It forms dimeric complexes. The D1/D2 heterodimer binds P680, chlorophylls that are the primary electron donor of PSII, and subsequent electron acceptors. It shares a non-heme iron and each subunit binds pheophytin, quinone, additional chlorophylls, carotenoids and lipids. There is also a Cl(-1) ion associated with D1 and D2, which is required for oxygen evolution. The PSII complex binds additional chlorophylls, carotenoids and specific lipids. is required as a cofactor.

Its subcellular location is the plastid. It localises to the chloroplast thylakoid membrane. The enzyme catalyses 2 a plastoquinone + 4 hnu + 2 H2O = 2 a plastoquinol + O2. Its function is as follows. Photosystem II (PSII) is a light-driven water:plastoquinone oxidoreductase that uses light energy to abstract electrons from H(2)O, generating O(2) and a proton gradient subsequently used for ATP formation. It consists of a core antenna complex that captures photons, and an electron transfer chain that converts photonic excitation into a charge separation. The D1/D2 (PsbA/PsbD) reaction center heterodimer binds P680, the primary electron donor of PSII as well as several subsequent electron acceptors. D2 is needed for assembly of a stable PSII complex. In Glycine max (Soybean), this protein is Photosystem II D2 protein.